A 320-amino-acid chain; its full sequence is Ferrochelatase (320 aa).

Positions 194 and 275 each coordinate Fe cation.

Belongs to the ferrochelatase family.

It localises to the cytoplasm. The enzyme catalyses heme b + 2 H(+) = protoporphyrin IX + Fe(2+). The protein operates within porphyrin-containing compound metabolism; protoheme biosynthesis; protoheme from protoporphyrin-IX: step 1/1. In terms of biological role, catalyzes the ferrous insertion into protoporphyrin IX. The chain is Ferrochelatase from Xylella fastidiosa (strain M12).